Here is a 209-residue protein sequence, read N- to C-terminus: Uracil phosphoribosyltransferase (209 aa).

5-phospho-alpha-D-ribose 1-diphosphate is bound by residues R79, R104, and D131–S139. Residues I194 and G199 to A201 contribute to the uracil site. Residue D200 coordinates 5-phospho-alpha-D-ribose 1-diphosphate.

The protein belongs to the UPRTase family. Mg(2+) is required as a cofactor.

The enzyme catalyses UMP + diphosphate = 5-phospho-alpha-D-ribose 1-diphosphate + uracil. Its pathway is pyrimidine metabolism; UMP biosynthesis via salvage pathway; UMP from uracil: step 1/1. Its activity is regulated as follows. Allosterically activated by GTP. Its function is as follows. Catalyzes the conversion of uracil and 5-phospho-alpha-D-ribose 1-diphosphate (PRPP) to UMP and diphosphate. In Listeria innocua serovar 6a (strain ATCC BAA-680 / CLIP 11262), this protein is Uracil phosphoribosyltransferase.